A 380-amino-acid chain; its full sequence is Alcohol dehydrogenase 2 (380 aa).

Zn(2+) contacts are provided by cysteine 48, threonine 50, histidine 70, cysteine 100, cysteine 103, cysteine 106, cysteine 114, and cysteine 178. Residues threonine 50 and histidine 70 each contribute to the an alcohol site. Threonine 50 provides a ligand contact to NAD(+). NAD(+) is bound by residues 203 to 208 (GLGAVG), aspartate 227, arginine 232, threonine 273, valine 296, 296 to 298 (VGV), phenylalanine 323, and arginine 373.

This sequence belongs to the zinc-containing alcohol dehydrogenase family. In terms of assembly, homodimer. Homotetramer. Requires Zn(2+) as cofactor.

It localises to the cytoplasm. It catalyses the reaction a primary alcohol + NAD(+) = an aldehyde + NADH + H(+). It carries out the reaction a secondary alcohol + NAD(+) = a ketone + NADH + H(+). The chain is Alcohol dehydrogenase 2 (ADH2) from Solanum lycopersicum (Tomato).